Reading from the N-terminus, the 463-residue chain is Cytochrome P450 4d8 (463 aa).

Residues E267 and C409 each coordinate heme.

The protein belongs to the cytochrome P450 family. Heme is required as a cofactor.

The protein localises to the endoplasmic reticulum membrane. It is found in the microsome membrane. Its function is as follows. May be involved in the metabolism of insect hormones and in the breakdown of synthetic insecticides. The chain is Cytochrome P450 4d8 (Cyp4d8) from Drosophila melanogaster (Fruit fly).